Here is a 35-residue protein sequence, read N- to C-terminus: Photosystem II reaction center protein M (35 aa).

The chain crosses the membrane as a helical span at residues 5–25 (IFGLTATALFIIIPTSFLLIL).

It belongs to the PsbM family. In terms of assembly, PSII is composed of 1 copy each of membrane proteins PsbA, PsbB, PsbC, PsbD, PsbE, PsbF, PsbH, PsbI, PsbJ, PsbK, PsbL, PsbM, PsbT, PsbX, PsbY, PsbZ, Psb30/Ycf12, at least 3 peripheral proteins of the oxygen-evolving complex and a large number of cofactors. It forms dimeric complexes.

It is found in the plastid. The protein localises to the chloroplast thylakoid membrane. Functionally, one of the components of the core complex of photosystem II (PSII). PSII is a light-driven water:plastoquinone oxidoreductase that uses light energy to abstract electrons from H(2)O, generating O(2) and a proton gradient subsequently used for ATP formation. It consists of a core antenna complex that captures photons, and an electron transfer chain that converts photonic excitation into a charge separation. This subunit is found at the monomer-monomer interface. The polypeptide is Photosystem II reaction center protein M (Tetradesmus obliquus (Green alga)).